The sequence spans 228 residues: Sensory transduction protein RegX3 (228 aa).

Residues 3–116 (SVLIVEDEES…ELIARIRAVL (114 aa)) enclose the Response regulatory domain. The residue at position 52 (D52) is a 4-aspartylphosphate. The ompR/PhoB-type DNA-binding region spans 129–228 (DGVLEAGPVR…VRGLGYKLEG (100 aa)).

Post-translationally, phosphorylated by SenX3.

Its function is as follows. Member of the two-component regulatory system SenX3/RegX3 involved in stress response. The system is involved in phosphate starvation response. Once phosphorylated by SenX3, activates the expression of the alkaline phosphatase phoA, the high-affinity phosphate transporter pstSCAB, phnDCE, phnF and senX3. May act as a negative regulator of NhaA. Acts by binding to a DNA motif consisting of an inverted repeat. The sequence is that of Sensory transduction protein RegX3 from Mycolicibacterium smegmatis (strain ATCC 700084 / mc(2)155) (Mycobacterium smegmatis).